Consider the following 642-residue polypeptide: Threonine--tRNA ligase (642 aa).

The 61-residue stretch at M1–T61 folds into the TGS domain. The segment at D243–P534 is catalytic. Residues C334, H385, and H511 each coordinate Zn(2+).

The protein belongs to the class-II aminoacyl-tRNA synthetase family. Homodimer. Zn(2+) serves as cofactor.

It is found in the cytoplasm. It carries out the reaction tRNA(Thr) + L-threonine + ATP = L-threonyl-tRNA(Thr) + AMP + diphosphate + H(+). Catalyzes the attachment of threonine to tRNA(Thr) in a two-step reaction: L-threonine is first activated by ATP to form Thr-AMP and then transferred to the acceptor end of tRNA(Thr). Also edits incorrectly charged L-seryl-tRNA(Thr). This is Threonine--tRNA ligase from Shewanella woodyi (strain ATCC 51908 / MS32).